The primary structure comprises 190 residues: Potassium-transporting ATPase KdpC subunit (190 aa).

A helical transmembrane segment spans residues 10–30 (TFIFLLLITGGVYPLLTTALG).

It belongs to the KdpC family. In terms of assembly, the system is composed of three essential subunits: KdpA, KdpB and KdpC.

The protein resides in the cell inner membrane. Part of the high-affinity ATP-driven potassium transport (or Kdp) system, which catalyzes the hydrolysis of ATP coupled with the electrogenic transport of potassium into the cytoplasm. This subunit acts as a catalytic chaperone that increases the ATP-binding affinity of the ATP-hydrolyzing subunit KdpB by the formation of a transient KdpB/KdpC/ATP ternary complex. The protein is Potassium-transporting ATPase KdpC subunit of Escherichia coli O157:H7.